A 120-amino-acid polypeptide reads, in one-letter code: NAD(P)H-quinone oxidoreductase subunit 3, chloroplastic (120 aa).

A run of 3 helical transmembrane segments spans residues 7–27 (YDYF…IFSL), 64–84 (MFAL…PWAM), and 89–109 (FGIS…IGLV).

The protein belongs to the complex I subunit 3 family. In terms of assembly, NDH is composed of at least 16 different subunits, 5 of which are encoded in the nucleus.

It localises to the plastid. It is found in the chloroplast thylakoid membrane. The catalysed reaction is a plastoquinone + NADH + (n+1) H(+)(in) = a plastoquinol + NAD(+) + n H(+)(out). It carries out the reaction a plastoquinone + NADPH + (n+1) H(+)(in) = a plastoquinol + NADP(+) + n H(+)(out). Functionally, NDH shuttles electrons from NAD(P)H:plastoquinone, via FMN and iron-sulfur (Fe-S) centers, to quinones in the photosynthetic chain and possibly in a chloroplast respiratory chain. The immediate electron acceptor for the enzyme in this species is believed to be plastoquinone. Couples the redox reaction to proton translocation, and thus conserves the redox energy in a proton gradient. The chain is NAD(P)H-quinone oxidoreductase subunit 3, chloroplastic from Marchantia polymorpha (Common liverwort).